The following is a 140-amino-acid chain: Fluoride-specific ion channel FluC 1 (140 aa).

4 helical membrane passes run 3–23, 38–58, 80–100, and 113–133; these read TGAT…GAAA, APLW…GLVL, ILYP…STVM, and IAGV…ALWC. Residues G91 and T94 each contribute to the Na(+) site.

The protein belongs to the fluoride channel Fluc/FEX (TC 1.A.43) family.

It is found in the cell membrane. It catalyses the reaction fluoride(in) = fluoride(out). Its activity is regulated as follows. Na(+) is not transported, but it plays an essential structural role and its presence is essential for fluoride channel function. Functionally, fluoride-specific ion channel. Important for reducing fluoride concentration in the cell, thus reducing its toxicity. This Corynebacterium jeikeium (strain K411) protein is Fluoride-specific ion channel FluC 1.